We begin with the raw amino-acid sequence, 294 residues long: N-acetylmuramic acid 6-phosphate etherase (294 aa).

One can recognise an SIS domain in the interval 54–217 (VIKSFEEEGR…STASMIGVGK (164 aa)). The active-site Proton donor is the Glu82. Glu113 is a catalytic residue.

Belongs to the GCKR-like family. MurNAc-6-P etherase subfamily. In terms of assembly, homodimer.

The catalysed reaction is N-acetyl-D-muramate 6-phosphate + H2O = N-acetyl-D-glucosamine 6-phosphate + (R)-lactate. Its pathway is amino-sugar metabolism; N-acetylmuramate degradation. Functionally, specifically catalyzes the cleavage of the D-lactyl ether substituent of MurNAc 6-phosphate, producing GlcNAc 6-phosphate and D-lactate. This chain is N-acetylmuramic acid 6-phosphate etherase, found in Bacillus cereus (strain G9842).